A 352-amino-acid polypeptide reads, in one-letter code: Phenylalanine--tRNA ligase alpha subunit (352 aa).

Glutamate 258 lines the Mg(2+) pocket.

Belongs to the class-II aminoacyl-tRNA synthetase family. Phe-tRNA synthetase alpha subunit type 1 subfamily. In terms of assembly, tetramer of two alpha and two beta subunits. Requires Mg(2+) as cofactor.

It is found in the cytoplasm. The catalysed reaction is tRNA(Phe) + L-phenylalanine + ATP = L-phenylalanyl-tRNA(Phe) + AMP + diphosphate + H(+). The sequence is that of Phenylalanine--tRNA ligase alpha subunit from Staphylococcus epidermidis (strain ATCC 35984 / DSM 28319 / BCRC 17069 / CCUG 31568 / BM 3577 / RP62A).